Reading from the N-terminus, the 564-residue chain is Centrosomal protein kizuna (564 aa).

The disordered stretch occupies residues 1-21 (MSEAGRAAAGPCPEVSPSRSQ). Positions 28–50 (RCLRDSETRRLELERKLMEYKSS) form a coiled coil. Disordered stretches follow at residues 178–201 (QPAA…PTQA), 304–345 (TGPQ…EDEP), 442–465 (ECGD…PNDS), 487–519 (IGNN…RPEF), and 531–564 (AFWG…DFYD). Positions 313–324 (QQAASQDSSSSS) are enriched in low complexity. The span at 447–463 (SSVQSNESSYSLPSIPN) shows a compositional bias: polar residues. Basic and acidic residues predominate over residues 493-519 (EAKESQEMCSERSSSSERSGDLSRPEF).

It belongs to the kizuna family.

The protein localises to the cytoplasm. The protein resides in the cytoskeleton. It is found in the microtubule organizing center. It localises to the centrosome. Its subcellular location is the cilium basal body. Functionally, centrosomal protein required for establishing a robust mitotic centrosome architecture that can endure the forces that converge on the centrosomes during spindle formation. Required for stabilizing the expanded pericentriolar material around the centriole. The polypeptide is Centrosomal protein kizuna (KIZ) (Gallus gallus (Chicken)).